Reading from the N-terminus, the 342-residue chain is Protease HtpX homolog (342 aa).

2 consecutive transmembrane segments (helical) span residues threonine 6 to glycine 26 and glycine 28 to serine 48. Residue histidine 130 participates in Zn(2+) binding. Residue glutamate 131 is part of the active site. Histidine 134 serves as a coordination point for Zn(2+). The next 2 membrane-spanning stretches (helical) occupy residues isoleucine 145–glycine 165 and glycine 173–valine 193. Glutamate 202 is a Zn(2+) binding site. The segment at proline 290 to asparagine 342 is disordered.

Belongs to the peptidase M48B family. The cofactor is Zn(2+).

It is found in the cell inner membrane. The polypeptide is Protease HtpX homolog (Allorhizobium ampelinum (strain ATCC BAA-846 / DSM 112012 / S4) (Agrobacterium vitis (strain S4))).